The primary structure comprises 404 residues: Indole-3-acetate O-methyltransferase 1 (404 aa).

Residues 82 to 83 (GC), N88, D120, 169 to 171 (TFY), and 186 to 188 (TFS) contribute to the S-adenosyl-L-methionine site. Residues N208, V212, R294, D295, F297, and N298 each coordinate Mg(2+).

This sequence belongs to the methyltransferase superfamily. SABATH family. As to quaternary structure, homodimer. Requires Mg(2+) as cofactor. Expressed in roots and panicles.

The catalysed reaction is (indol-3-yl)acetate + S-adenosyl-L-methionine = methyl (indol-3-yl)acetate + S-adenosyl-L-homocysteine. Catalyzes the methylation of the free carboxyl end of the plant hormone indole-3-acetic acid (IAA). Converts IAA to IAA methyl ester (MeIAA). Regulates IAA activities by IAA methylation. Methylation of IAA plays an important role in regulating plant development and auxin homeostasis. MeIAA seems to be an inactive form of IAA. The polypeptide is Indole-3-acetate O-methyltransferase 1 (IAMT1) (Oryza sativa subsp. japonica (Rice)).